Here is a 212-residue protein sequence, read N- to C-terminus: Deoxyribose-phosphate aldolase (212 aa).

D89 (proton donor/acceptor) is an active-site residue. Residue K151 is the Schiff-base intermediate with acetaldehyde of the active site. K180 serves as the catalytic Proton donor/acceptor.

Belongs to the DeoC/FbaB aldolase family. DeoC type 1 subfamily.

It is found in the cytoplasm. The catalysed reaction is 2-deoxy-D-ribose 5-phosphate = D-glyceraldehyde 3-phosphate + acetaldehyde. It participates in carbohydrate degradation; 2-deoxy-D-ribose 1-phosphate degradation; D-glyceraldehyde 3-phosphate and acetaldehyde from 2-deoxy-alpha-D-ribose 1-phosphate: step 2/2. Its function is as follows. Catalyzes a reversible aldol reaction between acetaldehyde and D-glyceraldehyde 3-phosphate to generate 2-deoxy-D-ribose 5-phosphate. The polypeptide is Deoxyribose-phosphate aldolase (Clostridium botulinum (strain Loch Maree / Type A3)).